Reading from the N-terminus, the 197-residue chain is uncharacterized protein (197 aa).

Residues 150–172 form a helical membrane-spanning segment; sequence SLKLNTTLPMFALNLICLLRSIL.

It localises to the membrane. This is an uncharacterized protein from Saccharomyces cerevisiae (strain ATCC 204508 / S288c) (Baker's yeast).